Reading from the N-terminus, the 1072-residue chain is DNA-directed RNA polymerase subunit beta (1072 aa).

The protein belongs to the RNA polymerase beta chain family. In terms of assembly, in plastids the minimal PEP RNA polymerase catalytic core is composed of four subunits: alpha, beta, beta', and beta''. When a (nuclear-encoded) sigma factor is associated with the core the holoenzyme is formed, which can initiate transcription.

The protein localises to the plastid. The protein resides in the chloroplast. The catalysed reaction is RNA(n) + a ribonucleoside 5'-triphosphate = RNA(n+1) + diphosphate. In terms of biological role, DNA-dependent RNA polymerase catalyzes the transcription of DNA into RNA using the four ribonucleoside triphosphates as substrates. The sequence is that of DNA-directed RNA polymerase subunit beta from Capsella bursa-pastoris (Shepherd's purse).